The sequence spans 409 residues: Elongation factor Tu, plastid (409 aa).

Positions lysine 10–valine 214 constitute a tr-type G domain. The G1 stretch occupies residues glycine 19–threonine 26. Glycine 19–threonine 26 lines the GTP pocket. Threonine 26 is a Mg(2+) binding site. Residues glycine 60–asparagine 64 form a G2 region. The segment at aspartate 81 to glycine 84 is G3. Residues aspartate 81 to histidine 85 and asparagine 136 to aspartate 139 each bind GTP. Positions asparagine 136–aspartate 139 are G4. The tract at residues serine 174–leucine 176 is G5.

It belongs to the TRAFAC class translation factor GTPase superfamily. Classic translation factor GTPase family. EF-Tu/EF-1A subfamily.

It is found in the plastid. The enzyme catalyses GTP + H2O = GDP + phosphate + H(+). In terms of biological role, GTP hydrolase that promotes the GTP-dependent binding of aminoacyl-tRNA to the A-site of ribosomes during protein biosynthesis. The sequence is that of Elongation factor Tu, plastid (tufA) from Helicosporidium sp. subsp. Simulium jonesii (Green alga).